Here is a 95-residue protein sequence, read N- to C-terminus: Co-chaperonin GroES (95 aa).

It belongs to the GroES chaperonin family. As to quaternary structure, heptamer of 7 subunits arranged in a ring. Interacts with the chaperonin GroEL.

It localises to the cytoplasm. In terms of biological role, together with the chaperonin GroEL, plays an essential role in assisting protein folding. The GroEL-GroES system forms a nano-cage that allows encapsulation of the non-native substrate proteins and provides a physical environment optimized to promote and accelerate protein folding. GroES binds to the apical surface of the GroEL ring, thereby capping the opening of the GroEL channel. This chain is Co-chaperonin GroES, found in Bordetella avium (strain 197N).